Reading from the N-terminus, the 179-residue chain is ATP synthase subunit delta (179 aa).

Belongs to the ATPase delta chain family. As to quaternary structure, F-type ATPases have 2 components, F(1) - the catalytic core - and F(0) - the membrane proton channel. F(1) has five subunits: alpha(3), beta(3), gamma(1), delta(1), epsilon(1). F(0) has three main subunits: a(1), b(2) and c(10-14). The alpha and beta chains form an alternating ring which encloses part of the gamma chain. F(1) is attached to F(0) by a central stalk formed by the gamma and epsilon chains, while a peripheral stalk is formed by the delta and b chains.

It localises to the cell membrane. Its function is as follows. F(1)F(0) ATP synthase produces ATP from ADP in the presence of a proton or sodium gradient. F-type ATPases consist of two structural domains, F(1) containing the extramembraneous catalytic core and F(0) containing the membrane proton channel, linked together by a central stalk and a peripheral stalk. During catalysis, ATP synthesis in the catalytic domain of F(1) is coupled via a rotary mechanism of the central stalk subunits to proton translocation. This protein is part of the stalk that links CF(0) to CF(1). It either transmits conformational changes from CF(0) to CF(1) or is implicated in proton conduction. The chain is ATP synthase subunit delta from Clostridium acetobutylicum (strain ATCC 824 / DSM 792 / JCM 1419 / IAM 19013 / LMG 5710 / NBRC 13948 / NRRL B-527 / VKM B-1787 / 2291 / W).